A 206-amino-acid polypeptide reads, in one-letter code: Ribosomal RNA large subunit methyltransferase E (206 aa).

Residues Gly60, Trp62, Asp80, Asp96, and Asp121 each coordinate S-adenosyl-L-methionine. Lys161 functions as the Proton acceptor in the catalytic mechanism.

Belongs to the class I-like SAM-binding methyltransferase superfamily. RNA methyltransferase RlmE family.

It localises to the cytoplasm. It catalyses the reaction uridine(2552) in 23S rRNA + S-adenosyl-L-methionine = 2'-O-methyluridine(2552) in 23S rRNA + S-adenosyl-L-homocysteine + H(+). In terms of biological role, specifically methylates the uridine in position 2552 of 23S rRNA at the 2'-O position of the ribose in the fully assembled 50S ribosomal subunit. This is Ribosomal RNA large subunit methyltransferase E from Nitrosomonas eutropha (strain DSM 101675 / C91 / Nm57).